A 469-amino-acid polypeptide reads, in one-letter code: Adenosylhomocysteinase (469 aa).

Substrate is bound by residues T63, D139, and E164. 165-167 (TTT) contributes to the NAD(+) binding site. The substrate site is built by K194 and D198. NAD(+) contacts are provided by residues N199, 228 to 233 (GYGDVG), E251, N300, 321 to 323 (IGH), and N375.

This sequence belongs to the adenosylhomocysteinase family. NAD(+) is required as a cofactor.

It is found in the cytoplasm. The catalysed reaction is S-adenosyl-L-homocysteine + H2O = L-homocysteine + adenosine. The protein operates within amino-acid biosynthesis; L-homocysteine biosynthesis; L-homocysteine from S-adenosyl-L-homocysteine: step 1/1. May play a key role in the regulation of the intracellular concentration of adenosylhomocysteine. This chain is Adenosylhomocysteinase, found in Pseudomonas aeruginosa (strain LESB58).